We begin with the raw amino-acid sequence, 287 residues long: Probable ketose 3-epimerase (287 aa).

Catalysis depends on Glu152, which acts as the Proton donor/acceptor. Positions 152 and 185 each coordinate Mn(2+). His188 is a substrate binding site. Residue His211 coordinates Mn(2+). Arg217 contacts substrate. The Proton donor/acceptor role is filled by Glu246. Mn(2+) is bound at residue Glu246.

This sequence belongs to the hyi family. Requires Mn(2+) as cofactor.

Functionally, probably catalyzes the epimerization of ketopentoses and/or ketohexoses at the C3 position. In Synechocystis sp. (strain ATCC 27184 / PCC 6803 / Kazusa), this protein is Probable ketose 3-epimerase.